The sequence spans 401 residues: Probable cysteine desulfurase (401 aa).

Lys-223 bears the N6-(pyridoxal phosphate)lysine mark.

Belongs to the class-V pyridoxal-phosphate-dependent aminotransferase family. Csd subfamily. Requires pyridoxal 5'-phosphate as cofactor.

It catalyses the reaction (sulfur carrier)-H + L-cysteine = (sulfur carrier)-SH + L-alanine. In terms of biological role, catalyzes the removal of elemental sulfur and selenium atoms from L-cysteine, L-cystine, L-selenocysteine, and L-selenocystine to produce L-alanine. This is Probable cysteine desulfurase (csd) from Pseudomonas aeruginosa (strain ATCC 15692 / DSM 22644 / CIP 104116 / JCM 14847 / LMG 12228 / 1C / PRS 101 / PAO1).